The sequence spans 157 residues: Phosphopantetheine adenylyltransferase (157 aa).

A substrate-binding site is contributed by serine 9. Residues serine 9 to phenylalanine 10 and histidine 17 contribute to the ATP site. Residues lysine 41, leucine 73, and lysine 87 each contribute to the substrate site. ATP-binding positions include glycine 88–arginine 90, glutamate 98, and tyrosine 123–serine 129.

This sequence belongs to the bacterial CoaD family. Homohexamer. The cofactor is Mg(2+).

It localises to the cytoplasm. It catalyses the reaction (R)-4'-phosphopantetheine + ATP + H(+) = 3'-dephospho-CoA + diphosphate. The protein operates within cofactor biosynthesis; coenzyme A biosynthesis; CoA from (R)-pantothenate: step 4/5. Its function is as follows. Reversibly transfers an adenylyl group from ATP to 4'-phosphopantetheine, yielding dephospho-CoA (dPCoA) and pyrophosphate. The protein is Phosphopantetheine adenylyltransferase of Alkaliphilus oremlandii (strain OhILAs) (Clostridium oremlandii (strain OhILAs)).